The following is a 273-amino-acid chain: SPbeta prophage-derived uncharacterized protein YomF (273 aa).

The stretch at 119–149 forms a coiled coil; that stretch reads VIETLQGLIDEAEDTIIRMNERIAECERVTK.

The protein is SPbeta prophage-derived uncharacterized protein YomF (yomF) of Bacillus subtilis (strain 168).